A 109-amino-acid chain; its full sequence is uncharacterized protein (109 aa).

The helical transmembrane segment at 82–102 (SLSFLLLLFFYFNNYYFLSMT) threads the bilayer.

The protein localises to the membrane. This is an uncharacterized protein from Saccharomyces cerevisiae (strain ATCC 204508 / S288c) (Baker's yeast).